Consider the following 37-residue polypeptide: MRVQPSVKKICRNCKIIRRNRVVRVICTDPRHKQKQG.

Belongs to the bacterial ribosomal protein bL36 family.

This chain is Large ribosomal subunit protein bL36, found in Chromobacterium violaceum (strain ATCC 12472 / DSM 30191 / JCM 1249 / CCUG 213 / NBRC 12614 / NCIMB 9131 / NCTC 9757 / MK).